Here is a 979-residue protein sequence, read N- to C-terminus: Pimaradiene synthase pbcA (979 aa).

A VYDTAW motif motif is present at residues 34–39 (VYDTAW). The DXDD B-type cyclization motif motif lies at 328–331 (DADD). 6 residues coordinate Mg(2+): aspartate 665, glutamate 669, asparagine 865, aspartate 866, serine 869, and aspartate 873. The DEXXE A-type cyclization motif motif lies at 665–669 (DEFME).

Belongs to the terpene synthase family. The cofactor is Mg(2+).

It catalyses the reaction (2E,6E,10E)-geranylgeranyl diphosphate = ent-copalyl diphosphate. The catalysed reaction is ent-copalyl diphosphate = ent-pimara-8(14),15-diene + diphosphate. It functions in the pathway secondary metabolite biosynthesis; terpenoid biosynthesis. Functionally, bifunctional terpene synthase; part of the gene cluster that mediates the biosynthesis of the diterpene ent-pimara-8(14),15-diene (PD). Within the cluster, the HMG-CoA reductase AN1593 functions in the mevalonate pathway, which produces isoprenoid precursors. The geranylgeranyl pyrophosphate (GGPP) synthase AN1592 is needed in the formation of GGPP, the precursor for diterpenes. Lastly, the pimaradiene synthase pbcA performs the 2 cyclization steps that convert GGPP to ent-pimara-8(14),15-diene with ent-copalyl diphosphate as an intermediate. The putative roles of the remaining cluster enzymes in ent-pimara-8(14),15-diene biosynthesis is unclear. The cytochrome P450 monooxygenase AN1598, the glutathione S-transferase AN1595, the oxidoreductases AN1596 and AN1597 probably function as decorative enzymes. It is possible that in biological conditions the compound is oxidized to ent-pimara-8(14),15-dien-19-oic acid, which is a bioactive diterpene compound predominant in many plant extracts. The chain is Pimaradiene synthase pbcA from Emericella nidulans (strain FGSC A4 / ATCC 38163 / CBS 112.46 / NRRL 194 / M139) (Aspergillus nidulans).